Here is a 484-residue protein sequence, read N- to C-terminus: Aspartyl aminopeptidase (484 aa).

Met-1 carries the N-acetylmethionine modification. His-84 is a Zn(2+) binding site. His-159 is a substrate binding site. The span at 188 to 206 (PVESKSTTTTTTTESPKTS) shows a compositional bias: low complexity. The disordered stretch occupies residues 188–213 (PVESKSTTTTTTTESPKTSDPQDVNS). Asp-266 serves as a coordination point for Zn(2+). Residue Glu-301 participates in substrate binding. Residues Glu-302 and Asp-354 each coordinate Zn(2+). Substrate-binding residues include Asp-354, His-357, Lys-382, and Tyr-389. Residue His-448 coordinates Zn(2+).

This sequence belongs to the peptidase M18 family. In terms of assembly, tetrahedron-shaped homododecamer built from six homodimers. The cofactor is Zn(2+).

The protein resides in the cytoplasm. The enzyme catalyses Release of an N-terminal aspartate or glutamate from a peptide, with a preference for aspartate.. Functionally, likely to play an important role in intracellular protein and peptide metabolism. The polypeptide is Aspartyl aminopeptidase (dnpep) (Dictyostelium discoideum (Social amoeba)).